The following is a 134-amino-acid chain: Holo-[acyl-carrier-protein] synthase (134 aa).

Positions 8 and 57 each coordinate Mg(2+).

It belongs to the P-Pant transferase superfamily. AcpS family. The cofactor is Mg(2+).

Its subcellular location is the cytoplasm. The enzyme catalyses apo-[ACP] + CoA = holo-[ACP] + adenosine 3',5'-bisphosphate + H(+). In terms of biological role, transfers the 4'-phosphopantetheine moiety from coenzyme A to a Ser of acyl-carrier-protein. In Rhizobium etli (strain ATCC 51251 / DSM 11541 / JCM 21823 / NBRC 15573 / CFN 42), this protein is Holo-[acyl-carrier-protein] synthase.